The sequence spans 453 residues: Chromosomal replication initiator protein DnaA (453 aa).

The domain I, interacts with DnaA modulators stretch occupies residues 1–74; it reads MKEKQFWNRI…GFEIYDAEIT (74 aa). The segment at 74–113 is domain II; that stretch reads TPHYIFTKPQDTTSSQVEEATNLTLYDYSPKLVSIPYSDT. The interval 114–331 is domain III, AAA+ region; the sequence is GLKEKYTFDN…GAINDITLIA (218 aa). ATP contacts are provided by glycine 158, glycine 160, lysine 161, and threonine 162. Residues 332–453 are domain IV, binds dsDNA; that stretch reads RVKKIKDITI…EIESIKKKIK (122 aa).

The protein belongs to the DnaA family. Oligomerizes as a right-handed, spiral filament on DNA at oriC.

Its subcellular location is the cytoplasm. Its function is as follows. Plays an essential role in the initiation and regulation of chromosomal replication. ATP-DnaA binds to the origin of replication (oriC) to initiate formation of the DNA replication initiation complex once per cell cycle. Binds the DnaA box (a 9 base pair repeat at the origin) and separates the double-stranded (ds)DNA. Forms a right-handed helical filament on oriC DNA; dsDNA binds to the exterior of the filament while single-stranded (ss)DNA is stabiized in the filament's interior. The ATP-DnaA-oriC complex binds and stabilizes one strand of the AT-rich DNA unwinding element (DUE), permitting loading of DNA polymerase. After initiation quickly degrades to an ADP-DnaA complex that is not apt for DNA replication. Binds acidic phospholipids. This Streptococcus pneumoniae (strain P1031) protein is Chromosomal replication initiator protein DnaA.